Here is a 76-residue protein sequence, read N- to C-terminus: MANRPLFKRKKFCRFTAEGIKKIDYKDVDLLKDFISENGRIIPARITGTRSYYQRQLNLAIERARFLALLPYTDQH.

Belongs to the bacterial ribosomal protein bS18 family. In terms of assembly, part of the 30S ribosomal subunit. Forms a tight heterodimer with protein bS6.

Functionally, binds as a heterodimer with protein bS6 to the central domain of the 16S rRNA, where it helps stabilize the platform of the 30S subunit. The sequence is that of Small ribosomal subunit protein bS18 from Nitrosomonas eutropha (strain DSM 101675 / C91 / Nm57).